The sequence spans 97 residues: MKWATLFMVSCVLMFFVMNNINEVESIHVEQAGVCEFTGEFPGKCGNNGRKMCVEAMNKKNKGSPGENKKNLRCECFDNPVVILGRPKRICRCRNNC.

The first 26 residues, 1–26 (MKWATLFMVSCVLMFFVMNNINEVES), serve as a signal peptide directing secretion. 4 disulfides stabilise this stretch: cysteine 35–cysteine 97, cysteine 45–cysteine 76, cysteine 53–cysteine 91, and cysteine 74–cysteine 93.

Belongs to the DEFL family.

Its subcellular location is the secreted. This is Putative defensin-like protein 227 (SCRL28) from Arabidopsis thaliana (Mouse-ear cress).